A 302-amino-acid chain; its full sequence is UDP-3-O-acyl-N-acetylglucosamine deacetylase (302 aa).

Residues His82, His238, and Asp242 each coordinate Zn(2+). His265 functions as the Proton donor in the catalytic mechanism.

The protein belongs to the LpxC family. Zn(2+) serves as cofactor.

The enzyme catalyses a UDP-3-O-[(3R)-3-hydroxyacyl]-N-acetyl-alpha-D-glucosamine + H2O = a UDP-3-O-[(3R)-3-hydroxyacyl]-alpha-D-glucosamine + acetate. It functions in the pathway glycolipid biosynthesis; lipid IV(A) biosynthesis; lipid IV(A) from (3R)-3-hydroxytetradecanoyl-[acyl-carrier-protein] and UDP-N-acetyl-alpha-D-glucosamine: step 2/6. Its function is as follows. Catalyzes the hydrolysis of UDP-3-O-myristoyl-N-acetylglucosamine to form UDP-3-O-myristoylglucosamine and acetate, the committed step in lipid A biosynthesis. The sequence is that of UDP-3-O-acyl-N-acetylglucosamine deacetylase from Leptospira biflexa serovar Patoc (strain Patoc 1 / Ames).